The chain runs to 329 residues: DNA-directed RNA polymerase subunit alpha (329 aa).

Residues 1 to 234 (MQGSVTEFLK…EQLDAFVELR (234 aa)) are alpha N-terminal domain (alpha-NTD). The tract at residues 248-329 (FDPILLRPVD…WPPASLADDL (82 aa)) is alpha C-terminal domain (alpha-CTD).

It belongs to the RNA polymerase alpha chain family. Homodimer. The RNAP catalytic core consists of 2 alpha, 1 beta, 1 beta' and 1 omega subunit. When a sigma factor is associated with the core the holoenzyme is formed, which can initiate transcription.

It carries out the reaction RNA(n) + a ribonucleoside 5'-triphosphate = RNA(n+1) + diphosphate. Its function is as follows. DNA-dependent RNA polymerase catalyzes the transcription of DNA into RNA using the four ribonucleoside triphosphates as substrates. The protein is DNA-directed RNA polymerase subunit alpha of Shewanella amazonensis (strain ATCC BAA-1098 / SB2B).